The primary structure comprises 1671 residues: Fatty acid synthase alpha subunit aflA (1671 aa).

A disordered region spans residues 40–60 (ITEEAPTEQPPLSTPPSLPQT). A compositionally biased stretch (pro residues) spans 47 to 58 (EQPPLSTPPSLP). Residues 75-153 (DVALSRVQIV…DANPTVQLGK (79 aa)) form the Carrier domain. The residue at position 113 (S113) is an O-(pantetheine 4'-phosphoryl)serine. Residues 492-729 (GKTFLVTGAG…AMLLTPDFVA (238 aa)) are ketoreductase (KR) domain. Residues 926–1428 (MEVLQEVAVE…QKGGQVVGVA (503 aa)) enclose the Ketosynthase family 3 (KS3) domain. C1113 acts as the For beta-ketoacyl synthase activity in catalysis. Positions 1244-1270 (SMISVTSRPSSRSSTSSEVSDKSSLTS) are enriched in low complexity. The segment at 1244 to 1288 (SMISVTSRPSSRSSTSSEVSDKSSLTSITSISNPAPRAQRARSTT) is disordered. Catalysis depends on for beta-ketoacyl synthase activity residues H1313 and H1354. Residues 1497–1521 (PSTGQYRFRSDATPALDDDALPPPG) are disordered. D1552 is a Mg(2+) binding site. Residues 1552-1554 (DLV), 1598-1608 (EAVFKCLQTHS), 1622-1625 (HGGN), and 1652-1654 (ISY) each bind acetyl-CoA. Mg(2+) is bound at residue S1653.

This sequence belongs to the thiolase-like superfamily. Fungal fatty acid synthetase subunit alpha family. In terms of assembly, [Alpha(6)beta(6)] hexamers of two multifunctional subunits (alpha and beta). 4'-phosphopantetheine is transferred from CoA to a specific serine of the acyl carrier domain by the C-terminal PPT domain. This modification is essential for activity because fatty acids are bound in thioester linkage to the sulfhydryl of the prosthetic group.

The catalysed reaction is acetyl-CoA + n malonyl-CoA + 2n NADPH + 4n H(+) = a long-chain-acyl-CoA + n CoA + n CO2 + 2n NADP(+).. It carries out the reaction a fatty acyl-[ACP] + malonyl-[ACP] + H(+) = a 3-oxoacyl-[ACP] + holo-[ACP] + CO2. It catalyses the reaction a (3R)-hydroxyacyl-[ACP] + NADP(+) = a 3-oxoacyl-[ACP] + NADPH + H(+). It participates in mycotoxin biosynthesis; aflatoxin biosynthesis. Its function is as follows. Fatty acid synthase alpha subunit; part of the gene cluster that mediates the biosynthesis of aflatoxins, a group of polyketide-derived furanocoumarins, and part of the most toxic and carcinogenic compounds among the known mycotoxins. The four major aflatoxins produced by A.parasiticus are aflatoxin B1 (AFB1), aflatoxin B2 (AFB2), aflatoxin G1 (AFG1) and aflatoxin G2 (AFG2). Within the aflatoxin pathway, the fungal fatty acid synthase aflA/aflB provides the hexanoyl starter unit to the acyl-carrier protein (ACP) domain of the norsolorinic acid synthase to allow the first step of the pathway. The biosynthesis of aflatoxins begins with the norsolorinic acid synthase aflC that combines a hexanoyl starter unit produced by the fatty acid synthase aflA/aflB and 7 malonyl-CoA extender units to synthesize the precursor NOR. The second step is the conversion of NOR to averantin (AVN) and requires the norsolorinic acid ketoreductase aflD, which catalyzes the dehydration of norsolorinic acid to form (1'S)-averantin. The norsolorinic acid reductases aflE and aflF may also play a role in the conversion of NOR to AVN. The cytochrome P450 monooxygenase aflG then catalyzes the hydroxylation of AVN to 5'hydroxyaverantin (HAVN). The next step is performed by the 5'-hydroxyaverantin dehydrogenase aflH that transforms HAVN to 5'-oxoaverantin (OAVN) which is further converted to averufin (AVF) by aflK that plays a dual role in the pathway, as a 5'-oxoaverantin cyclase that mediates conversion of 5'-oxoaverantin, as well as a versicolorin B synthase in a later step in the pathway. The averufin oxidase aflI catalyzes the conversion of AVF to versiconal hemiacetal acetate (VHA). VHA is then the substrate for the versiconal hemiacetal acetate esterase aflJ to yield versiconal (VAL). Versicolorin B synthase aflK then converts VAL to versicolorin B (VERB) by closing the bisfuran ring of aflatoxin which is required for DNA-binding, thus giving to aflatoxin its activity as a mutagen. Then, the activity of the versicolorin B desaturase aflL leads to versicolorin A (VERA). A branch point starts from VERB since it can also be converted to dihydrodemethylsterigmatocystin (DMDHST), probably also by aflL, VERA being a precursor for aflatoxins B1 and G1, and DMDHST for aflatoxins B2 and G2. Next, the versicolorin reductase aflM and the cytochrome P450 monooxygenase aflN are involved in conversion of VERA to demethylsterigmatocystin (DMST). AflX and aflY seem also involved in this step, through probable aflX-mediated epoxide ring-opening step following versicolorin A oxidation and aflY-mediated Baeyer-Villiger oxidation required for the formation of the xanthone ring. The methyltransferase aflO then leads to the modification of DMST to sterigmatocystin (ST), and of DMDHST to dihydrosterigmatocystin (DHST). Both ST and DHST are then substrates of the O-methyltransferase aflP to yield O-methylsterigmatocystin (OMST) and dihydro-O-methylsterigmatocystin (DHOMST), respectively. Finally OMST is converted to aflatoxins B1 and G1, and DHOMST to aflatoxins B2 and G2, via the action of several enzymes including O-methylsterigmatocystin oxidoreductase aflQ, the cytochrome P450 monooxygenase aflU, but also the NADH-dependent flavin oxidoreductase nadA which is specifically required for the synthesis of AFG1. In Aspergillus parasiticus (strain ATCC 56775 / NRRL 5862 / SRRC 143 / SU-1), this protein is Fatty acid synthase alpha subunit aflA.